The following is a 129-amino-acid chain: uncharacterized protein (129 aa).

Over 1–28 (MAGTLFIILRFVDTTLPSSRVYCVRSLE) the chain is Cytoplasmic. A helical membrane pass occupies residues 29 to 49 (VSVAVELAAATVLAFESIGVV). Residues 50–54 (DDCGR) are Extracellular-facing. A helical transmembrane segment spans residues 55–75 (SVLFSIILIAAFICSVFLIAS). Over 76 to 129 (EDIAGSRRSTGSCVTLWEGRNISFCLYRSNWLNTVPVGYMFFLRKNRSLDERYF) the chain is Cytoplasmic.

The protein resides in the membrane. This is an uncharacterized protein from Saccharomyces cerevisiae (strain ATCC 204508 / S288c) (Baker's yeast).